Reading from the N-terminus, the 463-residue chain is L-seryl-tRNA(Sec) selenium transferase (463 aa).

Lys295 is modified (N6-(pyridoxal phosphate)lysine).

Belongs to the SelA family. As to quaternary structure, homodecamer; pentamer of dimers. Binds only one seryl-tRNA(Sec) per dimer. Pyridoxal 5'-phosphate is required as a cofactor.

Its subcellular location is the cytoplasm. The catalysed reaction is L-seryl-tRNA(Sec) + selenophosphate + H(+) = L-selenocysteinyl-tRNA(Sec) + phosphate. It participates in aminoacyl-tRNA biosynthesis; selenocysteinyl-tRNA(Sec) biosynthesis; selenocysteinyl-tRNA(Sec) from L-seryl-tRNA(Sec) (bacterial route): step 1/1. Functionally, converts seryl-tRNA(Sec) to selenocysteinyl-tRNA(Sec) required for selenoprotein biosynthesis. The chain is L-seryl-tRNA(Sec) selenium transferase from Escherichia coli O45:K1 (strain S88 / ExPEC).